The following is a 965-amino-acid chain: Collagenase ColQ1 (965 aa).

The N-terminal stretch at 1-30 (MNKKSKINKVMLSISTMALSLGALQAPASA) is a signal peptide. Residues 31 to 93 (EEKVPYNVLK…KAAVKQVKES (63 aa)) constitute a propeptide that is removed on maturation. The interval 94–366 (YSMADLNKMN…AVEQITTNYN (273 aa)) is activator domain. Residues 94–765 (YSMADLNKMN…VFHGIAKDDG (672 aa)) form an S1 metalloprotease domain region. A catalytic subdomain region spans residues 376 to 645 (DLEKIRKEGK…MQQLIDNQDK (270 aa)). A Zn(2+)-binding site is contributed by H501. E502 is a catalytic residue. Residues H505 and E533 each coordinate Zn(2+). Positions 653 to 765 (DDYLAEHAPK…VFHGIAKDDG (113 aa)) are helper subdomain. Residues 769 to 850 (APTVNINGPY…ESKSETTVTV (82 aa)) enclose the PKD domain. Positions 842–867 (SKSETTVTVKDGSLTESEPNNRPEEA) are disordered. A compositionally biased stretch (polar residues) spans 845–859 (ETTVTVKDGSLTESE). The interval 853–965 (GSLTESEPNN…GDGTYKLSVK (113 aa)) is collagen-binding domain.

It belongs to the peptidase M9B family. Collagenase subfamily. It depends on Ca(2+) as a cofactor. Zn(2+) serves as cofactor.

It localises to the secreted. It carries out the reaction Digestion of native collagen in the triple helical region at Xaa-|-Gly bonds. With synthetic peptides, a preference is shown for Gly at P3 and P1', Pro and Ala at P2 and P2', and hydroxyproline, Ala or Arg at P3'.. Its activity is regulated as follows. Strongly inhibited by EDTA. Not inhibited by E-64 and PMSF, broad-spectrum cysteine and serine protease inhibitors. Its function is as follows. Acts as a true collagenase, which is highly active and cleaves natively folded collagen. In vitro, can also cleave gelatin and the synthetic peptide FALGPA (furylacryloyl-Leu-Gly-Pro-Ala). Causes damage on dermal collagen (COL), resulting in gaps in the tissue, which might lead to an accelerated bacterial infiltration and penetration into deeper sites of the host. The sequence is that of Collagenase ColQ1 from Bacillus cereus (strain Q1).